Here is a 34-residue protein sequence, read N- to C-terminus: Photosystem II reaction center protein T (34 aa).

The chain crosses the membrane as a helical span at residues 3-23 (ALVYTFLLVSTLGIIFFAIFF).

Belongs to the PsbT family. PSII is composed of 1 copy each of membrane proteins PsbA, PsbB, PsbC, PsbD, PsbE, PsbF, PsbH, PsbI, PsbJ, PsbK, PsbL, PsbM, PsbT, PsbY, PsbZ, Psb30/Ycf12, at least 3 peripheral proteins of the oxygen-evolving complex and a large number of cofactors. It forms dimeric complexes.

It is found in the plastid. It localises to the chloroplast thylakoid membrane. Functionally, found at the monomer-monomer interface of the photosystem II (PS II) dimer, plays a role in assembly and dimerization of PSII. PSII is a light-driven water plastoquinone oxidoreductase, using light energy to abstract electrons from H(2)O, generating a proton gradient subsequently used for ATP formation. This Solanum lycopersicum (Tomato) protein is Photosystem II reaction center protein T.